We begin with the raw amino-acid sequence, 261 residues long: 4-hydroxy-tetrahydrodipicolinate reductase (261 aa).

NAD(+)-binding positions include 11–16 (GFMGAM), 96–98 (GTT), and 122–125 (APNF). The active-site Proton donor/acceptor is the His152. His153 lines the (S)-2,3,4,5-tetrahydrodipicolinate pocket. Lys156 acts as the Proton donor in catalysis. 162 to 163 (GT) contributes to the (S)-2,3,4,5-tetrahydrodipicolinate binding site.

It belongs to the DapB family.

Its subcellular location is the cytoplasm. It carries out the reaction (S)-2,3,4,5-tetrahydrodipicolinate + NAD(+) + H2O = (2S,4S)-4-hydroxy-2,3,4,5-tetrahydrodipicolinate + NADH + H(+). The catalysed reaction is (S)-2,3,4,5-tetrahydrodipicolinate + NADP(+) + H2O = (2S,4S)-4-hydroxy-2,3,4,5-tetrahydrodipicolinate + NADPH + H(+). It functions in the pathway amino-acid biosynthesis; L-lysine biosynthesis via DAP pathway; (S)-tetrahydrodipicolinate from L-aspartate: step 4/4. Functionally, catalyzes the conversion of 4-hydroxy-tetrahydrodipicolinate (HTPA) to tetrahydrodipicolinate. The protein is 4-hydroxy-tetrahydrodipicolinate reductase of Lactobacillus helveticus (strain DPC 4571).